Reading from the N-terminus, the 444-residue chain is tRNA modification GTPase MnmE (444 aa).

(6S)-5-formyl-5,6,7,8-tetrahydrofolate-binding residues include Arg22, Glu79, and Arg118. The TrmE-type G domain maps to 214 to 368 (GMQVVLAGPP…LRDHLKSVMG (155 aa)). Asn224 serves as a coordination point for K(+). GTP contacts are provided by residues 224–229 (NAGKSS), 243–249 (TEVPGTT), and 268–271 (DTAG). A Mg(2+)-binding site is contributed by Ser228. Thr243, Val245, and Thr248 together coordinate K(+). Position 249 (Thr249) interacts with Mg(2+). A (6S)-5-formyl-5,6,7,8-tetrahydrofolate-binding site is contributed by Lys444.

It belongs to the TRAFAC class TrmE-Era-EngA-EngB-Septin-like GTPase superfamily. TrmE GTPase family. In terms of assembly, homodimer. Heterotetramer of two MnmE and two MnmG subunits. K(+) is required as a cofactor.

It localises to the cytoplasm. In terms of biological role, exhibits a very high intrinsic GTPase hydrolysis rate. Involved in the addition of a carboxymethylaminomethyl (cmnm) group at the wobble position (U34) of certain tRNAs, forming tRNA-cmnm(5)s(2)U34. This Alkalilimnicola ehrlichii (strain ATCC BAA-1101 / DSM 17681 / MLHE-1) protein is tRNA modification GTPase MnmE.